The chain runs to 258 residues: Imidazole glycerol phosphate synthase subunit HisF (258 aa).

Catalysis depends on residues Asp11 and Asp130.

It belongs to the HisA/HisF family. Heterodimer of HisH and HisF.

It is found in the cytoplasm. It carries out the reaction 5-[(5-phospho-1-deoxy-D-ribulos-1-ylimino)methylamino]-1-(5-phospho-beta-D-ribosyl)imidazole-4-carboxamide + L-glutamine = D-erythro-1-(imidazol-4-yl)glycerol 3-phosphate + 5-amino-1-(5-phospho-beta-D-ribosyl)imidazole-4-carboxamide + L-glutamate + H(+). The protein operates within amino-acid biosynthesis; L-histidine biosynthesis; L-histidine from 5-phospho-alpha-D-ribose 1-diphosphate: step 5/9. Its function is as follows. IGPS catalyzes the conversion of PRFAR and glutamine to IGP, AICAR and glutamate. The HisF subunit catalyzes the cyclization activity that produces IGP and AICAR from PRFAR using the ammonia provided by the HisH subunit. The sequence is that of Imidazole glycerol phosphate synthase subunit HisF from Cronobacter sakazakii (strain ATCC BAA-894) (Enterobacter sakazakii).